The following is a 520-amino-acid chain: Probable bifunctional tRNA threonylcarbamoyladenosine biosynthesis protein (520 aa).

The kae1 stretch occupies residues 1-318 (MKIGPVLGIE…YRADQVLVTW (318 aa)). Residues histidine 105, histidine 109, and tyrosine 126 each contribute to the Fe cation site. Residues 126 to 130 (YASGA), aspartate 158, glycine 171, glutamate 175, and asparagine 251 each bind L-threonylcarbamoyladenylate. Aspartate 279 provides a ligand contact to Fe cation. Positions 327–520 (RHPDAYSARG…HEIELRGRYL (194 aa)) constitute a Protein kinase domain. ATP is bound by residues 333–341 (SARGAEAIV) and lysine 350. Aspartate 437 acts as the Proton acceptor; for kinase activity in catalysis.

This sequence in the N-terminal section; belongs to the KAE1 / TsaD family. The protein in the C-terminal section; belongs to the protein kinase superfamily. Tyr protein kinase family. BUD32 subfamily. In terms of assembly, component of the KEOPS complex that consists of Kae1, Bud32, Cgi121 and Pcc1; the whole complex dimerizes. The cofactor is Fe(2+).

The protein localises to the cytoplasm. It catalyses the reaction L-seryl-[protein] + ATP = O-phospho-L-seryl-[protein] + ADP + H(+). It carries out the reaction L-threonyl-[protein] + ATP = O-phospho-L-threonyl-[protein] + ADP + H(+). The catalysed reaction is L-threonylcarbamoyladenylate + adenosine(37) in tRNA = N(6)-L-threonylcarbamoyladenosine(37) in tRNA + AMP + H(+). Functionally, required for the formation of a threonylcarbamoyl group on adenosine at position 37 (t(6)A37) in tRNAs that read codons beginning with adenine. Is a component of the KEOPS complex that is probably involved in the transfer of the threonylcarbamoyl moiety of threonylcarbamoyl-AMP (TC-AMP) to the N6 group of A37. The Kae1 domain likely plays a direct catalytic role in this reaction. The Bud32 domain probably displays kinase activity that regulates Kae1 function. This chain is Probable bifunctional tRNA threonylcarbamoyladenosine biosynthesis protein, found in Methanospirillum hungatei JF-1 (strain ATCC 27890 / DSM 864 / NBRC 100397 / JF-1).